The sequence spans 291 residues: Diaminopimelate epimerase (291 aa).

2 residues coordinate substrate: Asn-11 and Asn-78. The active-site Proton donor is the Cys-87. Substrate contacts are provided by residues 88 to 89, Asn-166, Asn-200, and 218 to 219; these read GN and ER. The Proton acceptor role is filled by Cys-227. A substrate-binding site is contributed by 228–229; it reads GT.

Belongs to the diaminopimelate epimerase family. Homodimer.

It is found in the cytoplasm. The catalysed reaction is (2S,6S)-2,6-diaminopimelate = meso-2,6-diaminopimelate. It functions in the pathway amino-acid biosynthesis; L-lysine biosynthesis via DAP pathway; DL-2,6-diaminopimelate from LL-2,6-diaminopimelate: step 1/1. Functionally, catalyzes the stereoinversion of LL-2,6-diaminopimelate (L,L-DAP) to meso-diaminopimelate (meso-DAP), a precursor of L-lysine and an essential component of the bacterial peptidoglycan. The polypeptide is Diaminopimelate epimerase (Mycolicibacterium smegmatis (strain ATCC 700084 / mc(2)155) (Mycobacterium smegmatis)).